A 341-amino-acid chain; its full sequence is Dual oxidase maturation factor 1 (341 aa).

Residues 1-24 (MAALGHTLPFYTGTKPTFPMDTTL) are Extracellular-facing. Residues 25-45 (AVIITIFLTALVTFIIILPGI) form a helical membrane-spanning segment. Residues 46–51 (RGKTRL) are Cytoplasmic-facing. A helical membrane pass occupies residues 52–72 (FWLLRVVTSLFIGAVILAVNF). At 73 to 183 (SSEWSVGHVN…RLAGHYASAM (111 aa)) the chain is on the extracellular side. N-linked (GlcNAc...) asparagine glycosylation is found at N84, N109, and N121. Residues 184–204 (LWVAFLCWLLANVMLSMPVLV) traverse the membrane as a helical segment. Residue Y205 is a topological domain, cytoplasmic. A helical membrane pass occupies residues 206–226 (GGHMLLATGLFQLLALFFFSM). The Extracellular segment spans residues 227-249 (TTSLISPCPLRLGTAVLHTHHGP). The chain crosses the membrane as a helical span at residues 250–270 (AFWITLATGLLCILLGLVMAV). Residues 271–341 (AHRMQPHRLK…EHPKESDCSL (71 aa)) lie on the Cytoplasmic side of the membrane.

Belongs to the DUOXA family. In terms of assembly, may interact with NUMB.

Its subcellular location is the membrane. Its function is as follows. May be required for the maturation and the transport from the endoplasmic reticulum to the plasma membrane of functional DUOX1. This is Dual oxidase maturation factor 1 (Duoxa1) from Mus musculus (Mouse).